The primary structure comprises 224 residues: Ribose-5-phosphate isomerase A 2 (224 aa).

Substrate contacts are provided by residues 27-30 (SGST), 83-86 (DGTD), and 96-99 (KGGG). The active-site Proton acceptor is the Glu105. Lys123 provides a ligand contact to substrate.

The protein belongs to the ribose 5-phosphate isomerase family. In terms of assembly, homodimer.

The catalysed reaction is aldehydo-D-ribose 5-phosphate = D-ribulose 5-phosphate. It participates in carbohydrate degradation; pentose phosphate pathway; D-ribose 5-phosphate from D-ribulose 5-phosphate (non-oxidative stage): step 1/1. Functionally, catalyzes the reversible conversion of ribose-5-phosphate to ribulose 5-phosphate. The sequence is that of Ribose-5-phosphate isomerase A 2 from Oceanobacillus iheyensis (strain DSM 14371 / CIP 107618 / JCM 11309 / KCTC 3954 / HTE831).